The following is a 396-amino-acid chain: L-lactate dehydrogenase (396 aa).

Positions 1-380 (MIISAASDYR…TQDSLVQGLG (380 aa)) constitute an FMN hydroxy acid dehydrogenase domain. Tyr-24 contacts substrate. 2 residues coordinate FMN: Ser-106 and Gln-127. Residue Tyr-129 participates in substrate binding. Thr-155 is a binding site for FMN. A substrate-binding site is contributed by Arg-164. Lys-251 lines the FMN pocket. His-275 functions as the Proton acceptor in the catalytic mechanism. Residue Arg-278 coordinates substrate. Residue 306–330 (DSGIRNGLDVVRMIALGADTVLLGR) participates in FMN binding.

The protein belongs to the FMN-dependent alpha-hydroxy acid dehydrogenase family. FMN serves as cofactor.

The protein resides in the cell inner membrane. It catalyses the reaction (S)-lactate + A = pyruvate + AH2. Functionally, catalyzes the conversion of L-lactate to pyruvate. Is coupled to the respiratory chain. This Shigella flexneri serotype 5b (strain 8401) protein is L-lactate dehydrogenase.